The sequence spans 158 residues: Cyclic pyranopterin monophosphate synthase (158 aa).

Residues 73–75 and 110–111 each bind substrate; these read LCH and ME. Residue aspartate 125 is part of the active site.

The protein belongs to the MoaC family. As to quaternary structure, homohexamer; trimer of dimers.

The catalysed reaction is (8S)-3',8-cyclo-7,8-dihydroguanosine 5'-triphosphate = cyclic pyranopterin phosphate + diphosphate. It participates in cofactor biosynthesis; molybdopterin biosynthesis. Its function is as follows. Catalyzes the conversion of (8S)-3',8-cyclo-7,8-dihydroguanosine 5'-triphosphate to cyclic pyranopterin monophosphate (cPMP). The chain is Cyclic pyranopterin monophosphate synthase from Ectopseudomonas mendocina (strain ymp) (Pseudomonas mendocina).